A 158-amino-acid polypeptide reads, in one-letter code: Ribonucleases P/MRP protein subunit POP6 (158 aa).

Residues 51 to 71 adopt a coiled-coil conformation; sequence KNDNIKKSVNKLDKQINMADR.

Component of nuclear RNase P and RNase MRP complexes. RNase P consists of an RNA moiety and at least 9 protein subunits including POP1, POP3, POP4, POP5, POP6, POP7, POP8, RPP1 and RPR2. RNase MRP complex consists of an RNA moiety and at least 10 protein subunits including POP1, POP3, POP4, POP5, POP6, POP7, POP8, RMP1, RPP1 and SNM1, many of which are shared with the RNase P complex.

It is found in the nucleus. The enzyme catalyses Endonucleolytic cleavage of RNA, removing 5'-extranucleotides from tRNA precursor.. In terms of biological role, component of ribonuclease P, a protein complex that generates mature tRNA molecules by cleaving their 5'-ends. Also a component of RNase MRP, which cleaves pre-rRNA sequences. In Saccharomyces cerevisiae (strain ATCC 204508 / S288c) (Baker's yeast), this protein is Ribonucleases P/MRP protein subunit POP6 (POP6).